We begin with the raw amino-acid sequence, 192 residues long: Segregation and condensation protein B (192 aa).

This sequence belongs to the ScpB family. As to quaternary structure, homodimer. Homodimerization may be required to stabilize the binding of ScpA to the Smc head domains. Component of a cohesin-like complex composed of ScpA, ScpB and the Smc homodimer, in which ScpA and ScpB bind to the head domain of Smc. The presence of the three proteins is required for the association of the complex with DNA.

Its subcellular location is the cytoplasm. Functionally, participates in chromosomal partition during cell division. May act via the formation of a condensin-like complex containing Smc and ScpA that pull DNA away from mid-cell into both cell halves. The polypeptide is Segregation and condensation protein B (Oceanobacillus iheyensis (strain DSM 14371 / CIP 107618 / JCM 11309 / KCTC 3954 / HTE831)).